The primary structure comprises 470 residues: Glutamate--tRNA ligase (470 aa).

The 'HIGH' region motif lies at P9–G19. The 'KMSKS' region motif lies at R236–R240. K239 is an ATP binding site.

This sequence belongs to the class-I aminoacyl-tRNA synthetase family. Glutamate--tRNA ligase type 1 subfamily. As to quaternary structure, monomer.

The protein localises to the cytoplasm. It catalyses the reaction tRNA(Glu) + L-glutamate + ATP = L-glutamyl-tRNA(Glu) + AMP + diphosphate. Functionally, catalyzes the attachment of glutamate to tRNA(Glu) in a two-step reaction: glutamate is first activated by ATP to form Glu-AMP and then transferred to the acceptor end of tRNA(Glu). This Legionella pneumophila (strain Lens) protein is Glutamate--tRNA ligase.